The sequence spans 617 residues: Vacuolar protein sorting-associated protein 33B (617 aa).

At alanine 2 the chain carries N-acetylalanine.

It belongs to the STXBP/unc-18/SEC1 family. Interacts with RAB11A and VIPAS39. Interacts with RAB25. Associates with adapter protein complex 3 (AP-3), clathrin:AP-3 and clathrin:HGS complexes. In terms of assembly, (Microbial infection) Interacts with M.tuberculosis PtpA. In terms of processing, phosphorylated on tyrosine residues. (Microbial infection) Dephosphorylated by M.tuberculosis PtpA, which induces the reduction of host phagolysosome fusion in M.tuberculosis-infected macrophages. In terms of tissue distribution, ubiquitous; highly expressed in testis and low expression in the lung.

The protein localises to the late endosome membrane. The protein resides in the lysosome membrane. Its subcellular location is the early endosome. It localises to the cytoplasmic vesicle. It is found in the clathrin-coated vesicle. The protein localises to the recycling endosome. Its function is as follows. May play a role in vesicle-mediated protein trafficking to lysosomal compartments and in membrane docking/fusion reactions of late endosomes/lysosomes. Required for proper trafficking and targeting of the collagen-modifying enzyme lysyl hydroxylase 3 (LH3) to intracellular collagen. Mediates phagolysosomal fusion in macrophages. Proposed to be involved in endosomal maturation implicating VIPAS39. In epithelial cells, the VPS33B:VIPAS39 complex may play a role in the apical recycling pathway and in the maintenance of the apical-basolateral polarity. Seems to be involved in the sorting of specific cargos from the trans-Golgi network to alpha-granule-destined multivesicular bodies (MVBs) promoting MVBs maturation in megakaryocytes. The sequence is that of Vacuolar protein sorting-associated protein 33B (VPS33B) from Homo sapiens (Human).